A 377-amino-acid chain; its full sequence is MSLVRLAHELPIEAPRTAWLDSIIKGDCVAALERLPDHSVDVIFADPPYNLQLGGDLHRPDQSMVSAVDDHWDQFESFQAYDAFTRAWLMACRRVLKPNGTIWVIGSYHNIFRVGSQLQDLGFWLLNDVIWRKTNPMPNFRGRRFQNAHETLIWASRDQKGKGYTFNYEAMKAANDDVQMRSDWLFPICTGSERLKDENGDKVHPTQKPEALLARIMMASSKPGDVILDPFFGSGTTGAVAKRLGRHFVGIEREQSYIDAATARIDAVEPLGKAELTVMTGKRAEPRVAFTSVLEAGLLRPGTVLCDERRRFAAIVRADGTLAANGEAGSIHRIGAKVQGFDACNGWTFWHYEENGALKPIDALRKVIRDQMAVAGA.

The region spanning 271 to 373 (LGKAELTVMT…LRKVIRDQMA (103 aa)) is the RAMA domain.

Belongs to the N(4)/N(6)-methyltransferase family.

It carries out the reaction a 2'-deoxyadenosine in DNA + S-adenosyl-L-methionine = an N(6)-methyl-2'-deoxyadenosine in DNA + S-adenosyl-L-homocysteine + H(+). A beta subtype methylase that recognizes the double-stranded sequence 5'-GANTC-3' and methylates A-2 on both strands. CcrM-mediated methylation has important cellular functions. Contributes to the accurate cell-cycle control of DNA replication and cellular morphology. This is DNA methyltransferase CcrM (ccrM) from Brucella anthropi (strain ATCC 49188 / DSM 6882 / CCUG 24695 / JCM 21032 / LMG 3331 / NBRC 15819 / NCTC 12168 / Alc 37) (Ochrobactrum anthropi).